The following is a 72-amino-acid chain: MAKDDVIQMQGEILENLPNATFRVKLENGHVVLGHISGKMRMNYIRILPGDKVTVELTPYDLSRARIVFRTK.

Residues 1–72 (MAKDDVIQMQ…SRARIVFRTK (72 aa)) enclose the S1-like domain.

This sequence belongs to the IF-1 family. Component of the 30S ribosomal translation pre-initiation complex which assembles on the 30S ribosome in the order IF-2 and IF-3, IF-1 and N-formylmethionyl-tRNA(fMet); mRNA recruitment can occur at any time during PIC assembly.

The protein resides in the cytoplasm. In terms of biological role, one of the essential components for the initiation of protein synthesis. Stabilizes the binding of IF-2 and IF-3 on the 30S subunit to which N-formylmethionyl-tRNA(fMet) subsequently binds. Helps modulate mRNA selection, yielding the 30S pre-initiation complex (PIC). Upon addition of the 50S ribosomal subunit IF-1, IF-2 and IF-3 are released leaving the mature 70S translation initiation complex. The protein is Translation initiation factor IF-1 of Herminiimonas arsenicoxydans.